Consider the following 132-residue polypeptide: Large ribosomal subunit protein uL14 (132 aa).

It belongs to the universal ribosomal protein uL14 family. Part of the 50S ribosomal subunit. Forms a cluster with proteins L3 and L24e, part of which may contact the 16S rRNA in 2 intersubunit bridges.

Functionally, binds to 23S rRNA. Forms part of two intersubunit bridges in the 70S ribosome. In Methanosarcina barkeri (strain Fusaro / DSM 804), this protein is Large ribosomal subunit protein uL14.